Here is an 840-residue protein sequence, read N- to C-terminus: Homeobox-leucine zipper protein HOX9 (840 aa).

Disordered regions lie at residues 1 to 26 and 135 to 160; these read MAAA…AGMD and NPSL…DASN. The segment covering 12–21 has biased composition (gly residues); sequence GSDGGGGGYD. Residues 26–89 constitute a DNA-binding region (homeobox); the sequence is DSGKYVRYTP…NRRCRDKQRK (64 aa). Residues 86–135 adopt a coiled-coil conformation; sequence KQRKEASRLQAVNRKLTAMNKLLMEENERLQKQVSQLVHENAYMKQQLQN. The 229-residue stretch at 157-385 folds into the START domain; the sequence is DASNPSGLLT…IAQETSGEVV (229 aa).

It belongs to the HD-ZIP homeobox family. Class III subfamily. Expressed in seedlings, roots, stems, leaf sheaths and blades and panicles.

The protein localises to the nucleus. Its function is as follows. Probable transcription factor. This is Homeobox-leucine zipper protein HOX9 (HOX9) from Oryza sativa subsp. japonica (Rice).